A 159-amino-acid polypeptide reads, in one-letter code: Small ribosomal subunit protein uS4 (159 aa).

The S4 RNA-binding domain maps to 106-158; the sequence is RRLQTIVYRMGLAKSIYHARQLIVHGHIAVAGRRVSSPGFLVPRELEDKISLI.

The protein belongs to the universal ribosomal protein uS4 family. In terms of assembly, part of the 30S ribosomal subunit. Contacts protein S5. The interaction surface between S4 and S5 is involved in control of translational fidelity.

In terms of biological role, one of the primary rRNA binding proteins, it binds directly to 16S rRNA where it nucleates assembly of the body of the 30S subunit. Functionally, with S5 and S12 plays an important role in translational accuracy. This Pyrobaculum neutrophilum (strain DSM 2338 / JCM 9278 / NBRC 100436 / V24Sta) (Thermoproteus neutrophilus) protein is Small ribosomal subunit protein uS4.